The following is a 155-amino-acid chain: Ribosomal RNA large subunit methyltransferase H (155 aa).

S-adenosyl-L-methionine is bound by residues leucine 73, glycine 104, and 123–128 (LSPLTL).

It belongs to the RNA methyltransferase RlmH family. In terms of assembly, homodimer.

The protein localises to the cytoplasm. The catalysed reaction is pseudouridine(1915) in 23S rRNA + S-adenosyl-L-methionine = N(3)-methylpseudouridine(1915) in 23S rRNA + S-adenosyl-L-homocysteine + H(+). Its function is as follows. Specifically methylates the pseudouridine at position 1915 (m3Psi1915) in 23S rRNA. This chain is Ribosomal RNA large subunit methyltransferase H, found in Pseudomonas aeruginosa (strain UCBPP-PA14).